Here is a 376-residue protein sequence, read N- to C-terminus: Immunoglobulin G-binding protein H (376 aa).

Positions 1-41 (MTRQQTKKNYSLRKLKTGTASVAVALTVLGAGFANQTTVKA) are cleaved as a signal peptide. The tract at residues 69 to 271 (TSLENEKLKS…AAKKELEANH (203 aa)) is disordered. Basic and acidic residues-rich tracts occupy residues 72–146 (ENEK…KRYQ), 156–203 (ETEK…DKQI), 211–245 (LSRD…DKQI), and 253–271 (LSRD…EANH). 3 C repeats span residues 153 to 187 (QQLE…EAEH), 195 to 229 (QKLK…EANH), and 237 to 271 (QKLK…EANH). 4 D repeats span residues 272 to 277 (QKLEAE), 278 to 283 (AKALKE), 286 to 291 (AKQAEE), and 293 to 298 (AKLRAG). Residues 292 to 348 (LAKLRAGKASDSQTPDTKPGNKAVPGKGQAPQAGTKPNQNKAPMKETKRQLPSTGET) form a disordered region. The short motif at 342–346 (LPSTG) is the LPXTG sorting signal element. Residue Thr345 is modified to Pentaglycyl murein peptidoglycan amidated threonine. The propeptide at 346 to 376 (GETANPFFTAAALTVMATAGVAAVVKRKEEN) is removed by sortase.

This sequence belongs to the M protein family.

It is found in the secreted. It localises to the cell wall. This chain is Immunoglobulin G-binding protein H, found in Streptococcus pyogenes serotype M1.